Consider the following 258-residue polypeptide: MKKMPMRKRFGQHFLHDSFVLQKIVSAIHPQKTDTLVEIGPGRGALTDYLLTECDNLALVEIDRDLVAFLQKKYNQQKNITIYQNDALQFDFSSVKTDKPLRVVGNLPYNISTPLLFHLFSQIHCIEDMHFMLQKEVVRRITAEVGSHDYGRLSVMAQYFCDNTYLFTVSPQAFTPPPRVESAIIRLIPRHNFTPVAKNLDQLSHVVKEAFSYRRKTVGNALKKLINPSQWPLLEINPQLRPQELTVEDFVKISNILN.

His13, Leu15, Gly40, Glu61, Asp86, and Asn106 together coordinate S-adenosyl-L-methionine.

It belongs to the class I-like SAM-binding methyltransferase superfamily. rRNA adenine N(6)-methyltransferase family. RsmA subfamily.

Its subcellular location is the cytoplasm. It carries out the reaction adenosine(1518)/adenosine(1519) in 16S rRNA + 4 S-adenosyl-L-methionine = N(6)-dimethyladenosine(1518)/N(6)-dimethyladenosine(1519) in 16S rRNA + 4 S-adenosyl-L-homocysteine + 4 H(+). Its function is as follows. Specifically dimethylates two adjacent adenosines (A1518 and A1519) in the loop of a conserved hairpin near the 3'-end of 16S rRNA in the 30S particle. May play a critical role in biogenesis of 30S subunits. The chain is Ribosomal RNA small subunit methyltransferase A from Coxiella burnetii (strain CbuG_Q212) (Coxiella burnetii (strain Q212)).